Consider the following 380-residue polypeptide: MASLRKTHPLLKIVNDALIDLPAPSNISAWWNFGSLLGLCLVTQILTGLFLAMHYTSDVATAFSSVAHICRDVNYGWLIRNIHANGASFFFICLYLHIGRGLYYGSYLYKETWNIGVVLFLLVMMTAFVGYVLPWGQMSFWGATVITNLLSAVPYVGDTLVQWIWGGFSVDNATLTRFFAFHFLFPFIIVALTVLHFFFLHETGSNNPTGINSDADKVPFHPYFSYKDLFGLVLLLLALSSLSFFSPNLLGDPDNFIPANPLVTPPHIKPEWYFLFAYAILRSIPNKLGGVLALLASILILMLVPILHTSKQRGLMFRPLTQLLFWILVADVMILTWIGGMPVEHPFIAVGQIASVLYFTLFLILIPTTGWLENKILEWN.

The next 4 helical transmembrane spans lie at 33–53 (FGSL…FLAM), 77–98 (WLIR…YLHI), 113–133 (WNIG…GYVL), and 178–198 (FFAF…LHFF). The heme b site is built by His-83 and His-97. 2 residues coordinate heme b: His-182 and His-196. An a ubiquinone-binding site is contributed by His-201. Helical transmembrane passes span 226-246 (YKDL…SFFS), 288-308 (LGGV…PILH), 320-340 (LTQL…WIGG), and 347-367 (FIAV…ILIP).

The protein belongs to the cytochrome b family. In terms of assembly, the cytochrome bc1 complex contains 3 respiratory subunits (MT-CYB, CYC1 and UQCRFS1), 2 core proteins (UQCRC1 and UQCRC2) and probably 6 low-molecular weight proteins. Heme b is required as a cofactor.

It localises to the mitochondrion inner membrane. Its function is as follows. Component of the ubiquinol-cytochrome c reductase complex (complex III or cytochrome b-c1 complex) that is part of the mitochondrial respiratory chain. The b-c1 complex mediates electron transfer from ubiquinol to cytochrome c. Contributes to the generation of a proton gradient across the mitochondrial membrane that is then used for ATP synthesis. The sequence is that of Cytochrome b (mt-cyb) from Zenopsis nebulosa (Mirror dory).